The following is a 247-amino-acid chain: Cell division protein ZapD (247 aa).

This sequence belongs to the ZapD family. As to quaternary structure, interacts with FtsZ.

It is found in the cytoplasm. Cell division factor that enhances FtsZ-ring assembly. Directly interacts with FtsZ and promotes bundling of FtsZ protofilaments, with a reduction in FtsZ GTPase activity. This is Cell division protein ZapD from Klebsiella pneumoniae (strain 342).